Consider the following 161-residue polypeptide: Dehydrin DHN3 (161 aa).

Positions 1-12 (MEHGHATNRVDE) are enriched in basic and acidic residues. A disordered region spans residues 1–161 (MEHGHATNRV…KIKEKLPGQH (161 aa)). Residues 20 to 38 (HGVGTGMGAHGGVGTGAAA) show a composition bias toward gly residues. Low complexity-rich tracts occupy residues 93–107 (DQQQ…HGHT) and 115–130 (HGAT…QGHT). Repeat copies occupy residues 101–123 (YGQH…TGGT) and 124–144 (YGQQ…DGTG). The 2 X approximate tandem repeats stretch occupies residues 101–144 (YGQHGHTGMTGTGEHGATATGGTYGQQGHTGMTGTGAHGTDGTG). Gly residues predominate over residues 131-142 (GMTGTGAHGTDG). The span at 143-161 (TGEKKGIMDKIKEKLPGQH) shows a compositional bias: basic and acidic residues.

The protein belongs to the plant dehydrin family.

The protein is Dehydrin DHN3 (DHN3) of Hordeum vulgare (Barley).